Consider the following 183-residue polypeptide: UPF0200 protein Memar_1556 (183 aa).

8–15 (GMPASGKG) serves as a coordination point for ATP.

Belongs to the UPF0200 family.

The chain is UPF0200 protein Memar_1556 from Methanoculleus marisnigri (strain ATCC 35101 / DSM 1498 / JR1).